The chain runs to 624 residues: ERAD-associated E3 ubiquitin-protein ligase ASI1 (624 aa).

The Perinuclear space segment spans residues 1–69 (MNSSTSSENV…SEEIPPTLRS (69 aa)). N2, N19, and N29 each carry an N-linked (GlcNAc...) asparagine glycan. A helical transmembrane segment spans residues 70 to 90 (VFDTIGFFFSPYAIFCFVIAI). Residues 91-116 (VLNRFVVFYAVLNNGSRRTLPLWLSN) are Nuclear-facing. Residues 117 to 137 (VFHVSAVVVLAMVSLGPLTLG) form a helical membrane-spanning segment. Topologically, residues 138–152 (KDFKILGDPAFAQEK) are perinuclear space. A helical transmembrane segment spans residues 153 to 173 (FLLNIFYAFAYSYCVETIFTI). Topologically, residues 174-209 (MRNSSPLEGTDYSLFELSIQFYTMTNNNTKFLDSPD) are nuclear. The chain crosses the membrane as a helical span at residues 210 to 230 (YIIDCSMAILSRILIHLVEIF). Topologically, residues 231-273 (RLRNYRLLFSTIMNLCHICYLGIRVKQGGWKSLPFSVKFRHFP) are perinuclear space. A helical transmembrane segment spans residues 274–294 (KLFSVSIICLSLLIFKLSCLI). The Nuclear segment spans residues 295-624 (RWDPFGKSRN…CKVHPVSDSK (330 aa)). The segment at 467-490 (TSDDEYSEDYEPSEVESLGDSDEE) is disordered. Acidic residues predominate over residues 468-490 (SDDEYSEDYEPSEVESLGDSDEE). The segment at 568-608 (CAVCKVNERNTVLWPCRCFAICEDCRISLGLRGFSTCVCCR) adopts an RING-type; atypical zinc-finger fold.

Component of the Asi complex, which contains ASI1, ASI2 and ASI3. Interacts directly with ASI3. Post-translationally, glycosylation is not required for ASI1 function.

The protein resides in the nucleus inner membrane. It catalyses the reaction S-ubiquitinyl-[E2 ubiquitin-conjugating enzyme]-L-cysteine + [acceptor protein]-L-lysine = [E2 ubiquitin-conjugating enzyme]-L-cysteine + N(6)-ubiquitinyl-[acceptor protein]-L-lysine.. Functionally, E3 ubiquitin-protein ligase which transfers ubiquitin to substrates promoting their degradation. Part of the nuclear inner membrane (INM)-specific branch of the ER-associated degradation (ERAD) pathway, required for the elimination of misfolded proteins in the INM, a specialized ER subdomain. Required for ERG11 degradation. Negative regulator of SPS-sensor signaling. Together with ASI2 and ASI3, prevents the unprocessed precursor forms of STP1 and STP2 that escape cytoplasmic anchoring from inducing SPS-sensor-regulated genes in the absence of inducing signals. Controls amino acid permease (AAP) gene expression in response to amino acid availability, a process mediated by the transcription factors STP1 and STP1. This chain is ERAD-associated E3 ubiquitin-protein ligase ASI1 (ASI1), found in Saccharomyces cerevisiae (strain ATCC 204508 / S288c) (Baker's yeast).